Here is a 232-residue protein sequence, read N- to C-terminus: Lipoarabinomannan carrier protein LprG (232 aa).

Positions 1-21 (MQTRLTAILAAFLTAVALLAG) are cleaved as a signal peptide. Cysteine 22 carries N-palmitoyl cysteine lipidation. Cysteine 22 is lipidated: S-diacylglycerol cysteine.

It belongs to the LppX/LprAFG lipoprotein family. In terms of processing, modified by Lgt on Cys-22 with an S-linked diacylglyceral, signal peptide is removed by LspA, Cys-22 is further modifed with a fatty acid on its amino group by Lnt yielding a triacylated protein.

It localises to the cell inner membrane. Functionally, helps membrane protein MHAS_02168/C731_2106 (P55) transport triacylglycerides (TAG) across the inner cell membrane into the periplasm and probably ultimately to the outer membrane. Binds TAG in its hydrophobic cavity and transfers it between lipid bilayers. TAG probably regulates lipid metabolism and growth regulation and plays a structural role in the outer membrane. Also binds mannosides, lipoarabinomannan and lipomannan and various glycolipids in the same cavity. The lprG-MHAS_02167/C731_2107 operon complements the vancomycin sensitivity of an M.smegmatis knockout of the same operon. This Mycolicibacterium hassiacum (strain DSM 44199 / CIP 105218 / JCM 12690 / 3849) (Mycobacterium hassiacum) protein is Lipoarabinomannan carrier protein LprG.